A 502-amino-acid chain; its full sequence is Glycerol kinase (502 aa).

T13 contacts ADP. Positions 13, 14, and 15 each coordinate ATP. Residue T13 coordinates sn-glycerol 3-phosphate. R17 is an ADP binding site. Sn-glycerol 3-phosphate is bound by residues R83, E84, Y136, and D246. Glycerol-binding residues include R83, E84, Y136, D246, and Q247. ADP contacts are provided by T268 and G311. T268, G311, Q315, and G412 together coordinate ATP. G412 and N416 together coordinate ADP.

It belongs to the FGGY kinase family.

The enzyme catalyses glycerol + ATP = sn-glycerol 3-phosphate + ADP + H(+). It participates in polyol metabolism; glycerol degradation via glycerol kinase pathway; sn-glycerol 3-phosphate from glycerol: step 1/1. Inhibited by fructose 1,6-bisphosphate (FBP). Its function is as follows. Key enzyme in the regulation of glycerol uptake and metabolism. Catalyzes the phosphorylation of glycerol to yield sn-glycerol 3-phosphate. This Francisella tularensis subsp. mediasiatica (strain FSC147) protein is Glycerol kinase.